The chain runs to 246 residues: MSSINKKELKKFEKISHNWWNKDGEFGILHRINHIRIEYIIEKIKLHYNDISKLQILDVGCGGGLIAAPLASQGFNVTAIDALKSNIETATIYAQKNDLKINYLQTTIEELENDKLYDVVICLEVIEHVENVQQFILNLVQHIKPNGIAIISTINRTKKAYLFGIIVAEYILGWVPKNTHDYSKFLKPSEIYEILTDTNIEIKELKGLVFNLARNEWKLSNDIDVNYFMYLGKKINSLSNAINSIP.

S-adenosyl-L-methionine contacts are provided by R36, G60, D81, and L123.

The protein belongs to the methyltransferase superfamily. UbiG/COQ3 family.

The catalysed reaction is a 3-demethylubiquinol + S-adenosyl-L-methionine = a ubiquinol + S-adenosyl-L-homocysteine + H(+). It catalyses the reaction a 3-(all-trans-polyprenyl)benzene-1,2-diol + S-adenosyl-L-methionine = a 2-methoxy-6-(all-trans-polyprenyl)phenol + S-adenosyl-L-homocysteine + H(+). It participates in cofactor biosynthesis; ubiquinone biosynthesis. In terms of biological role, O-methyltransferase that catalyzes the 2 O-methylation steps in the ubiquinone biosynthetic pathway. The polypeptide is Ubiquinone biosynthesis O-methyltransferase (Rickettsia typhi (strain ATCC VR-144 / Wilmington)).